Consider the following 77-residue polypeptide: Putative defensin-like protein 129 (77 aa).

A signal peptide spans 1 to 25; it reads MTKNTALTIFMVVLVIEMVMEETQG. Cystine bridges form between Cys28-Cys77, Cys37-Cys59, Cys42-Cys71, and Cys46-Cys73.

Belongs to the DEFL family.

It localises to the secreted. The sequence is that of Putative defensin-like protein 129 (LCR13) from Arabidopsis thaliana (Mouse-ear cress).